We begin with the raw amino-acid sequence, 229 residues long: 2,3-bisphosphoglycerate-dependent phosphoglycerate mutase (229 aa).

Substrate-binding positions include 7 to 14, 20 to 21, arginine 59, 86 to 89, lysine 97, 113 to 114, and 182 to 183; these read RHGQSEWN, TG, ERHY, RR, and GN. Catalysis depends on histidine 8, which acts as the Tele-phosphohistidine intermediate. Residue glutamate 86 is the Proton donor/acceptor of the active site.

This sequence belongs to the phosphoglycerate mutase family. BPG-dependent PGAM subfamily.

It catalyses the reaction (2R)-2-phosphoglycerate = (2R)-3-phosphoglycerate. It functions in the pathway carbohydrate degradation; glycolysis; pyruvate from D-glyceraldehyde 3-phosphate: step 3/5. Catalyzes the interconversion of 2-phosphoglycerate and 3-phosphoglycerate. This is 2,3-bisphosphoglycerate-dependent phosphoglycerate mutase from Listeria monocytogenes serotype 4b (strain F2365).